The following is a 722-amino-acid chain: Transcription factor kayak, isoforms D/sro (722 aa).

Low complexity predominate over residues 173-188 (QHQTQQQHQSQQQQQH). Disordered regions lie at residues 173–193 (QHQT…RQDY), 283–317 (LGQG…HTDS), and 350–407 (GSAS…KRRV). The span at 283–300 (LGQGSESEDSNASYNDTQ) shows a compositional bias: polar residues. Low complexity-rich tracts occupy residues 308-317 (TDTSSAHTDS) and 350-364 (GSAS…TSNT). Residues 385-448 (EQKRAVRRER…NQLEYLLATH (64 aa)) form the bZIP domain. Residues 387–406 (KRAVRRERNKQAAARCRKRR) are basic motif. Residues 413–420 (LTEEVEQL) form a leucine-zipper region. Low complexity predominate over residues 477–498 (AGSSGSGASSHHNHNSNDSSNG). 2 disordered regions span residues 477–519 (AGSS…PLDL) and 683–722 (DGGT…LVSL). Residues 506 to 516 (TLNSTGRSNSP) show a composition bias toward polar residues. Ser515 carries the post-translational modification Phosphoserine.

This sequence belongs to the bZIP family. Fos subfamily. In terms of assembly, homodimer. Heterodimer with Jra. The kay-Jra heterodimer binds more stably to the AP-1 site than either of the two proteins alone.

The protein localises to the nucleus. Its function is as follows. Developmentally regulated transcription factor AP-1 binds and recognizes the enhancer DNA sequence: 5'-TGA[CG]TCA-3'. May play a role in the function or determination of a particular subset of cells in the developing embryo. It is able to carry out its function either independently of or in conjunction with Jra. The protein is Transcription factor kayak, isoforms D/sro of Drosophila melanogaster (Fruit fly).